Reading from the N-terminus, the 964-residue chain is MILEKPSWIRHEGLQIFSIDIQTGGLRFATGGGDQKVRIWSMESVHKDNTNNDSKQRLLATLRDHFGSVNCVRWAKHGRYLASGSDDQVILIHERKAGSGTSEFGSGEPPDAENWKVIMTWRGHTADVVDLSWSPDDSTLASGSLDNTIHIWNMNNGICTAVLRGHTSLVKGVTWDPIGSFIASQSDDKTVMIWRTSDWSLAHKTEGHWTKSLGSTFFRRLAWSPCCHFITTTHGFQKPRHSAPVLERGEWAATFDFLGHNAPIVVVKFNNSTFRKNFSSDQDPKAAPVGWANGASKTPTKEQQPYNVIAIGSQDRTITVWTTASARPLFVARHFFSQSVVDLSWSPDGYSLFACSLDGSAANFHFEVKELGHRLSDSEMDEWKRNRYGDVGGRQSNLAESPAQLLLEQASAKQSAGEKVTSIVEQGKAPPKVSAGVPNPGLVVLSLEVPEVSHEDSKKTAGPTADDVKKGNQLSSPVKQREYRRPDGRKRIIPEAVGFASNQDNIPNHSQNHPVNFSSLDQRMNGTKPSYGSNSNSNNCGVKDRTSVTARANITESLVIQKASAGAGNDGRLSIEHTRSMAPSSLTPCSALSIHVINKNGNEDALPVCLEARPVERGAGDMIGVGALSTKETEIKCIKGTKTLWSDRISGKVTVLAGNANFWAVGCEDGFLQVYTRCGVRAMPAMMMGSAAVFIDCDDSWKLLLVTGRGLMYIWNLYDRACILHDSLASLVASPDESSAKDAGTVKVISATFSRCGSPLVALASRHAFLYDMSLKCWLRIADDCFPASNFASSFSFPQGGELGKLQIDIGKFMARKPIWSRVTDDGLQTRAHLENQLASSLALKSAQEYRQCLLSYVRFLAREADESRLREVCESFLGPPMGKVGSASPTDPKNLAWDPDVLGMKKHKLLKEDILPSMASNRKVQRLLNEFMDLLLEYETDVTLIPQPGTEGNGNGNDKVMTS.

6 WD repeats span residues 10–50 (RHEG…KDNT), 64–103 (DHFG…GTSE), 123–162 (GHTA…CTAV), 165–204 (GHTS…LAHK), 259–331 (GHNA…PLFV), and 335–376 (FFSQ…HRLS). Residues 453-490 (SHEDSKKTAGPTADDVKKGNQLSSPVKQREYRRPDGRK) are disordered. Basic and acidic residues predominate over residues 479-490 (KQREYRRPDGRK). The WD 7 repeat unit spans residues 644-685 (LWSDRISGKVTVLAGNANFWAVGCEDGFLQVYTRCGVRAMPA). The stretch at 920 to 940 (ASNRKVQRLLNEFMDLLLEYE) forms a coiled coil.

Belongs to the WD repeat HIR1 family. Interacts with RS2. In terms of tissue distribution, more abundant in apices and young leaf primordia than in fully expanded leaf tissues.

The protein localises to the nucleus. Its function is as follows. Histone chaperone involved in maintining knox genes silencing throughout leaf development. This Zea mays (Maize) protein is Protein HIRA.